The primary structure comprises 129 residues: Protein RfbJ (129 aa).

The protein belongs to the glycosyltransferase 2 family.

It participates in bacterial outer membrane biogenesis; lipopolysaccharide biosynthesis. This chain is Protein RfbJ (rfbJ), found in Shigella flexneri.